Here is a 158-residue protein sequence, read N- to C-terminus: Cyclic pyranopterin monophosphate synthase (158 aa).

Residues 75 to 77 (LCH) and 113 to 114 (ME) contribute to the substrate site. Residue aspartate 128 is part of the active site.

This sequence belongs to the MoaC family. In terms of assembly, homohexamer; trimer of dimers.

The enzyme catalyses (8S)-3',8-cyclo-7,8-dihydroguanosine 5'-triphosphate = cyclic pyranopterin phosphate + diphosphate. The protein operates within cofactor biosynthesis; molybdopterin biosynthesis. Its function is as follows. Catalyzes the conversion of (8S)-3',8-cyclo-7,8-dihydroguanosine 5'-triphosphate to cyclic pyranopterin monophosphate (cPMP). This chain is Cyclic pyranopterin monophosphate synthase, found in Vibrio campbellii (strain ATCC BAA-1116).